The chain runs to 2587 residues: Clavatol synthase claF (2587 aa).

The interval 93–256 (LLSPLVVIVQ…TEVALSGRFH (164 aa)) is N-terminal acylcarrier protein transacylase domain (SAT). Cys-137 acts as the Nucleophile; for transacylase activity in catalysis. The active-site Proton donor/acceptor; for transacylase activity is His-256. In terms of domain architecture, Ketosynthase family 3 (KS3) spans 383–799 (DDQIAVIGMA…GSNASMIITQ (417 aa)). Catalysis depends on for beta-ketoacyl synthase activity residues Cys-548, His-683, and His-722. Positions 912 to 1222 (CFGGQISTYV…ESLPLLAEAT (311 aa)) are malonyl-CoA:ACP transacylase (MAT) domain. Positions 1284-1416 (PKGLTTFIGF…GSIVFLPASD (133 aa)) are N-terminal hotdog fold. The region spanning 1284 to 1595 (PKGLTTFIGF…YRLVPMDSMR (312 aa)) is the PKS/mFAS DH domain. The segment at 1315–1593 (LTSANVALNT…ISYRLVPMDS (279 aa)) is product template (PT) domain. Residues 1436-1595 (ASLLQGNGAD…YRLVPMDSMR (160 aa)) are C-terminal hotdog fold. Positions 1609–1635 (STAAVSSKSTPVHAPTPTTTVSSTPSS) are disordered. Residues 1617-1635 (STPVHAPTPTTTVSSTPSS) are compositionally biased toward low complexity. Positions 1654 to 1728 (PDISAKMCEI…SLVSCIRSTL (75 aa)) constitute a Carrier domain. O-(pantetheine 4'-phosphoryl)serine is present on Ser-1688. Active-site for methyltransferase activity residues include Tyr-1947, His-2059, and Glu-2085. Residues 1952 to 2126 (VNTVWIKQLE…ATYWEKVLQS (175 aa)) form a methyltransferase (CMeT) domain region. The tract at residues 2208 to 2452 (SLSSGQCVLV…KILPELDGTL (245 aa)) is NADPH-binding (R) domain.

It depends on pantetheine 4'-phosphate as a cofactor.

It catalyses the reaction 3 malonyl-CoA + acetyl-CoA + AH2 + 2 S-adenosyl-L-methionine + H(+) = clavatol + A + 2 S-adenosyl-L-homocysteine + 3 CO2 + 4 CoA + H2O. Its pathway is secondary metabolite biosynthesis. Non-reducing polyketide synthase; part of the cla gene cluster that produces clavatol and ortho-quinone methide. The clavatol biosynthesis cluster cla and the terrestric acid cluster tra are both involved in the production of peniphenones and penilactones. The non-reducing PKS claF is responsible for the formation of clavatol from successive condensations of 3 malonyl-CoA units, presumably with a simple acetyl-CoA starter unit, and 2 methylation steps. The esterase claE probably collaborates with claF by catalyzing the hydrolysis of ACP-bound acyl intermediates to free the ACP from stalled intermediates. The clavatol oxidase claD then converts clavatol to hydroxyclavatol. Spontaneous dehydration of hydroxyclavatol leads to the accumulation of the highly active ortho-quinone methide. On the other hand, the PKS-NRPS hybrid traA is involved in the formation of crustosic acid, with the help of traB and traD. The polyketide synthase module (PKS) of traA is responsible for the synthesis of the polyketide backbone via the condensation of an acetyl-CoA starter unit with 3 malonyl-CoA units. The downstream nonribosomal peptide synthetase (NRPS) module then amidates the carboxyl end of the polyketide with L-malic acid. Because traA lacks a designated enoylreductase (ER) domain, the required activity is provided the enoyl reductase traG. Crustosic acid undergoes decarboxylation and isomerization to the terrestric acid, catalyzed by the 2-oxoglutarate-dependent dioxygenase traH. Both acids are further converted to the 2 gamma-butyrolactones (R)-5-methyltetronic acid and (S)-5-carboxylmethyltetronic acid, with involvement of the cytochrome P450 monooxygenase claJ. Spontaneous addition of the methide to these gamma-butyrolactones leads to peniphenone D and penilactone D, which undergo again stereospecific attacking by methide to give penilactones A and B. The protein is Clavatol synthase claF of Penicillium crustosum (Blue mold fungus).